A 312-amino-acid chain; its full sequence is MKVAVLGAAGGIGQALALLLKNQLPSGSELSLYDIAPVTPGVAVDLSHIPTAVKIKGFSGEDATPALEGADVVLISAGVARKPGMDRSDLFNVNAGIVKNLVQQIAKTCPKACVGIITNPVNTTVAIAAEVLKKAGVYDKNKLFGVTTLDIIRSNTFVAELKGKLPTEVEVPVIGGHSGVTILPLLSQIPGVSFTEQEAADLTKRIQNAGTEVVEAKAGGGSATLSMGQAAARFGLSLVRALQGETGVVECAYVEGDGQYARFFSQPLLLGKNGVEERKSIGTLSAFEQRSLEGMLDTLKKDITLGEEFVTK.

NAD(+)-binding positions include 7–13 (GAAGGIG) and Asp-34. The substrate site is built by Arg-81 and Arg-87. NAD(+)-binding positions include Asn-94 and 117 to 119 (ITN). Substrate-binding residues include Asn-119 and Arg-153. His-177 functions as the Proton acceptor in the catalytic mechanism. NAD(+) is bound at residue Met-227.

It belongs to the LDH/MDH superfamily. MDH type 1 family. As to quaternary structure, homodimer.

The enzyme catalyses (S)-malate + NAD(+) = oxaloacetate + NADH + H(+). Functionally, catalyzes the reversible oxidation of malate to oxaloacetate. This is Malate dehydrogenase from Salmonella arizonae (strain ATCC BAA-731 / CDC346-86 / RSK2980).